A 622-amino-acid chain; its full sequence is Cilia- and flagella-associated protein 206 (622 aa).

A disordered region spans residues 571 to 592 (QVYPPKDTSTQSMREDSTGVPR).

It belongs to the CFAP206 family.

The protein resides in the cytoplasm. The protein localises to the cytoskeleton. It localises to the cilium axoneme. Its subcellular location is the cilium basal body. Essential for sperm motility and is involved in the regulation of the beating frequency of motile cilia on the epithelial cells of the respiratory tract. Required for the establishment of radial spokes in sperm flagella. The protein is Cilia- and flagella-associated protein 206 of Macaca fascicularis (Crab-eating macaque).